A 309-amino-acid polypeptide reads, in one-letter code: tRNA dimethylallyltransferase (309 aa).

Residue 9-16 participates in ATP binding; sequence GPTAVGKT. 11-16 serves as a coordination point for substrate; sequence TAVGKT. Residues 34–37 form an interaction with substrate tRNA region; that stretch reads DSMQ.

Belongs to the IPP transferase family. In terms of assembly, monomer. Requires Mg(2+) as cofactor.

The enzyme catalyses adenosine(37) in tRNA + dimethylallyl diphosphate = N(6)-dimethylallyladenosine(37) in tRNA + diphosphate. Functionally, catalyzes the transfer of a dimethylallyl group onto the adenine at position 37 in tRNAs that read codons beginning with uridine, leading to the formation of N6-(dimethylallyl)adenosine (i(6)A). The polypeptide is tRNA dimethylallyltransferase (Enterococcus faecalis (strain ATCC 700802 / V583)).